We begin with the raw amino-acid sequence, 429 residues long: Adenylosuccinate synthetase (429 aa).

GTP-binding positions include 12-18 (GDEGKGK) and 40-42 (GHT). Asp13 functions as the Proton acceptor in the catalytic mechanism. Mg(2+)-binding residues include Asp13 and Gly40. IMP contacts are provided by residues 13-16 (DEGK), 38-41 (NAGH), Thr129, Arg143, Gln223, Thr238, and Arg302. Catalysis depends on His41, which acts as the Proton donor. Residue 298-304 (TVTGRPR) participates in substrate binding. GTP-binding positions include Arg304, 330 to 332 (KLD), and 412 to 414 (STS).

The protein belongs to the adenylosuccinate synthetase family. In terms of assembly, homodimer. Mg(2+) is required as a cofactor.

Its subcellular location is the cytoplasm. The enzyme catalyses IMP + L-aspartate + GTP = N(6)-(1,2-dicarboxyethyl)-AMP + GDP + phosphate + 2 H(+). It functions in the pathway purine metabolism; AMP biosynthesis via de novo pathway; AMP from IMP: step 1/2. Plays an important role in the de novo pathway of purine nucleotide biosynthesis. Catalyzes the first committed step in the biosynthesis of AMP from IMP. This Gluconobacter oxydans (strain 621H) (Gluconobacter suboxydans) protein is Adenylosuccinate synthetase.